A 318-amino-acid polypeptide reads, in one-letter code: NADH-ubiquinone oxidoreductase chain 1 (318 aa).

Helical transmembrane passes span 3–23, 69–89, 102–122, 146–166, 171–191, 222–242, 253–273, and 294–314; these read FMNL…LTLL, VLFI…WIPL, ILFM…SGWA, LAII…STLI, HIWL…STLA, LFFL…IILF, ELYT…FLWV, and LPLT…LAGI.

It belongs to the complex I subunit 1 family. Core subunit of respiratory chain NADH dehydrogenase (Complex I) which is composed of 45 different subunits.

It localises to the mitochondrion inner membrane. It carries out the reaction a ubiquinone + NADH + 5 H(+)(in) = a ubiquinol + NAD(+) + 4 H(+)(out). Core subunit of the mitochondrial membrane respiratory chain NADH dehydrogenase (Complex I) which catalyzes electron transfer from NADH through the respiratory chain, using ubiquinone as an electron acceptor. Essential for the catalytic activity and assembly of complex I. This Cnephaeus nilssonii (Northern bat) protein is NADH-ubiquinone oxidoreductase chain 1 (MT-ND1).